We begin with the raw amino-acid sequence, 119 residues long: Fluoride-specific ion channel FluC 2 (119 aa).

2 helical membrane-spanning segments follow: residues 1 to 21 (MIFA…ALTS) and 44 to 64 (GAFF…YAFL). Residues G70 and T73 each contribute to the Na(+) site. A helical transmembrane segment spans residues 98-118 (LLASYLGGAVLLTCGYYLGSL).

It belongs to the fluoride channel Fluc/FEX (TC 1.A.43) family.

It localises to the cell membrane. It carries out the reaction fluoride(in) = fluoride(out). Na(+) is not transported, but it plays an essential structural role and its presence is essential for fluoride channel function. In terms of biological role, fluoride-specific ion channel. Important for reducing fluoride concentration in the cell, thus reducing its toxicity. The polypeptide is Fluoride-specific ion channel FluC 2 (Lactobacillus delbrueckii subsp. bulgaricus (strain ATCC 11842 / DSM 20081 / BCRC 10696 / JCM 1002 / NBRC 13953 / NCIMB 11778 / NCTC 12712 / WDCM 00102 / Lb 14)).